Here is a 338-residue protein sequence, read N- to C-terminus: Heat-inducible transcription repressor HrcA (338 aa).

It belongs to the HrcA family.

In terms of biological role, negative regulator of class I heat shock genes (grpE-dnaK-dnaJ and groELS operons). Prevents heat-shock induction of these operons. The polypeptide is Heat-inducible transcription repressor HrcA (Bacillus anthracis (strain A0248)).